The primary structure comprises 83 residues: Exodeoxyribonuclease 7 small subunit (83 aa).

It belongs to the XseB family. Heterooligomer composed of large and small subunits.

The protein resides in the cytoplasm. It catalyses the reaction Exonucleolytic cleavage in either 5'- to 3'- or 3'- to 5'-direction to yield nucleoside 5'-phosphates.. Functionally, bidirectionally degrades single-stranded DNA into large acid-insoluble oligonucleotides, which are then degraded further into small acid-soluble oligonucleotides. This chain is Exodeoxyribonuclease 7 small subunit, found in Rhizobium etli (strain ATCC 51251 / DSM 11541 / JCM 21823 / NBRC 15573 / CFN 42).